We begin with the raw amino-acid sequence, 282 residues long: Large ribosomal subunit protein uL2 (282 aa).

Disordered stretches follow at residues 31–55 (KRLTKPVRKSGGRNAHGKVTTRHIG) and 223–282 (LAMN…NTQR). 2 stretches are compositionally biased toward basic residues: residues 34-55 (TKPVRKSGGRNAHGKVTTRHIG) and 270-282 (VTRRRPGVRNTQR).

Belongs to the universal ribosomal protein uL2 family. Part of the 50S ribosomal subunit. Forms a bridge to the 30S subunit in the 70S ribosome.

Its function is as follows. One of the primary rRNA binding proteins. Required for association of the 30S and 50S subunits to form the 70S ribosome, for tRNA binding and peptide bond formation. It has been suggested to have peptidyltransferase activity; this is somewhat controversial. Makes several contacts with the 16S rRNA in the 70S ribosome. The protein is Large ribosomal subunit protein uL2 of Anaeromyxobacter dehalogenans (strain 2CP-C).